Here is a 141-residue protein sequence, read N- to C-terminus: Hemoglobin subunit alpha (141 aa).

In terms of domain architecture, Globin spans 1-141; that stretch reads VLSPADKTNV…VSTVLTSKYR (141 aa). Ser3 carries the phosphoserine modification. Lys7 carries the N6-succinyllysine modification. Thr8 carries the post-translational modification Phosphothreonine. An N6-succinyllysine modification is found at Lys11. Residue Ser35 is modified to Phosphoserine. Lys40 bears the N6-succinyllysine mark. Ser49 carries the phosphoserine modification. Residue His58 coordinates O2. Residue His87 participates in heme b binding. Ser102 bears the Phosphoserine mark. At Thr108 the chain carries Phosphothreonine. Ser124 carries the phosphoserine modification. 2 positions are modified to phosphothreonine: Thr134 and Thr137. Ser138 carries the phosphoserine modification.

Belongs to the globin family. As to quaternary structure, heterotetramer of two alpha chains and two beta chains. In terms of tissue distribution, red blood cells.

Its function is as follows. Involved in oxygen transport from the lung to the various peripheral tissues. Functionally, hemopressin acts as an antagonist peptide of the cannabinoid receptor CNR1. Hemopressin-binding efficiently blocks cannabinoid receptor CNR1 and subsequent signaling. This is Hemoglobin subunit alpha (HBA) from Eulemur fulvus fulvus (Brown lemur).